A 304-amino-acid chain; its full sequence is Ornithine carbamoyltransferase (304 aa).

Carbamoyl phosphate-binding positions include 53–56 (STRT), Q80, R104, and 131–134 (HPCQ). Residues N162, D219, and 223 to 224 (SM) each bind L-ornithine. Carbamoyl phosphate contacts are provided by residues 259 to 260 (CL) and R287.

Belongs to the aspartate/ornithine carbamoyltransferase superfamily. OTCase family.

The protein localises to the cytoplasm. It carries out the reaction carbamoyl phosphate + L-ornithine = L-citrulline + phosphate + H(+). The protein operates within amino-acid biosynthesis; L-arginine biosynthesis; L-arginine from L-ornithine and carbamoyl phosphate: step 1/3. In terms of biological role, reversibly catalyzes the transfer of the carbamoyl group from carbamoyl phosphate (CP) to the N(epsilon) atom of ornithine (ORN) to produce L-citrulline. The chain is Ornithine carbamoyltransferase from Herminiimonas arsenicoxydans.